The chain runs to 202 residues: Transcription factor IBH1 (202 aa).

The segment covering Met-1–Asn-16 has biased composition (pro residues). The interval Met-1–Arg-33 is disordered. Positions Thr-136–Leu-185 constitute a bHLH domain.

Belongs to the bHLH protein family. In terms of assembly, interacts with ILI1. Binds to ILI5/BUL1 and BC1. Interacts with BCL1 and BCL2. As to expression, highly expressed in roots and at lower levels in leaf blades, leaf sheaths, lamina joint, stems and panicles.

Atypical and probable non DNA-binding bHLH transcription factor that acts as a negative regulator of cell elongation and plant development. Binds the transcription factor ILI1 and forms a heterodimer of antagonistic bHLH transcription factors that function downstream of BZR1 to mediate brassinosteroid regulation of cell elongation and lamina inclination. This Oryza sativa subsp. japonica (Rice) protein is Transcription factor IBH1.